A 274-amino-acid polypeptide reads, in one-letter code: tRNA-cytidine(32) 2-sulfurtransferase (274 aa).

A PP-loop motif motif is present at residues 40-45 (SGGKDS). 3 residues coordinate [4Fe-4S] cluster: Cys-115, Cys-118, and Cys-206.

The protein belongs to the TtcA family. As to quaternary structure, homodimer. Mg(2+) is required as a cofactor. Requires [4Fe-4S] cluster as cofactor.

Its subcellular location is the cytoplasm. The catalysed reaction is cytidine(32) in tRNA + S-sulfanyl-L-cysteinyl-[cysteine desulfurase] + AH2 + ATP = 2-thiocytidine(32) in tRNA + L-cysteinyl-[cysteine desulfurase] + A + AMP + diphosphate + H(+). It participates in tRNA modification. Its function is as follows. Catalyzes the ATP-dependent 2-thiolation of cytidine in position 32 of tRNA, to form 2-thiocytidine (s(2)C32). The sulfur atoms are provided by the cysteine/cysteine desulfurase (IscS) system. This chain is tRNA-cytidine(32) 2-sulfurtransferase, found in Stutzerimonas stutzeri (strain A1501) (Pseudomonas stutzeri).